Here is a 239-residue protein sequence, read N- to C-terminus: Proteasome subunit beta type-6 (239 aa).

Residue alanine 2 is modified to N-acetylalanine. A propeptide spans 2 to 34 (removed in mature form); sequence AATLVAARGTRPAPAWGPEAIAPDWENREVSTG. The active-site Nucleophile is threonine 35. Position 69 is a phosphothreonine (threonine 69).

This sequence belongs to the peptidase T1B family. In terms of assembly, the 26S proteasome consists of a 20S proteasome core and two 19S regulatory subunits. The 20S proteasome core is a barrel-shaped complex made of 28 subunits that are arranged in four stacked rings. The two outer rings are each formed by seven alpha subunits, and the two inner rings are formed by seven beta subunits. The proteolytic activity is exerted by three beta-subunits PSMB5, PSMB6 and PSMB7.

The protein resides in the cytoplasm. Its subcellular location is the nucleus. The catalysed reaction is Cleavage of peptide bonds with very broad specificity.. Its function is as follows. Component of the 20S core proteasome complex involved in the proteolytic degradation of most intracellular proteins. This complex plays numerous essential roles within the cell by associating with different regulatory particles. Associated with two 19S regulatory particles, forms the 26S proteasome and thus participates in the ATP-dependent degradation of ubiquitinated proteins. The 26S proteasome plays a key role in the maintenance of protein homeostasis by removing misfolded or damaged proteins that could impair cellular functions, and by removing proteins whose functions are no longer required. Associated with the PA200 or PA28, the 20S proteasome mediates ubiquitin-independent protein degradation. This type of proteolysis is required in several pathways including spermatogenesis (20S-PA200 complex) or generation of a subset of MHC class I-presented antigenic peptides (20S-PA28 complex). Within the 20S core complex, PSMB6 displays a peptidylglutamyl-hydrolyzing activity also termed postacidic or caspase-like activity, meaning that the peptides bond hydrolysis occurs directly after acidic residues. This chain is Proteasome subunit beta type-6 (PSMB6), found in Bos taurus (Bovine).